The chain runs to 218 residues: Mitochondrial fission factor (218 aa).

The Cytoplasmic portion of the chain corresponds to 1-198; the sequence is MAEISRIQYE…ENKERAKREM (198 aa). Thr-89 carries the post-translational modification Phosphothreonine. Phosphoserine is present on residues Ser-129, Ser-131, Ser-146, and Ser-171. The stretch at 167-198 forms a coiled coil; that stretch reads VDAASLRRQIIKLNRRLQLLEEENKERAKREM. The chain crosses the membrane as a helical; Anchor for type IV membrane protein span at residues 199–216; the sequence is VMYSITVAFWLLNSWLWF. Over 217-218 the chain is Mitochondrial intermembrane; sequence RR.

It belongs to the Tango11 family. Homodimer. Interacts with DNM1L. Interacts with C11orf65/MFI; the interaction inhibits MFF interaction with DNM1L.

The protein resides in the mitochondrion outer membrane. The protein localises to the peroxisome. Its subcellular location is the cytoplasmic vesicle. It is found in the secretory vesicle. It localises to the synaptic vesicle. Its function is as follows. Plays a role in mitochondrial and peroxisomal fission. Promotes the recruitment and association of the fission mediator dynamin-related protein 1 (DNM1L) to the mitochondrial surface. May be involved in regulation of synaptic vesicle membrane dynamics by recruitment of DNM1L to clathrin-containing vesicles. This is Mitochondrial fission factor (MFF) from Bos taurus (Bovine).